The chain runs to 300 residues: Protoheme IX farnesyltransferase (300 aa).

The next 9 membrane-spanning stretches (helical) occupy residues 26–46 (VVQL…PGLP), 54–74 (IAWA…FNCI), 102–122 (LLFS…LVNP), 123–143 (LTMW…TLIL), 150–170 (NIVI…AAMT), 177–197 (ALIL…ALAL), 224–244 (VLLY…YGMS), 246–266 (WPYL…GFAL), and 279–299 (FRFS…DHYL).

This sequence belongs to the UbiA prenyltransferase family. Protoheme IX farnesyltransferase subfamily.

Its subcellular location is the cell inner membrane. It catalyses the reaction heme b + (2E,6E)-farnesyl diphosphate + H2O = Fe(II)-heme o + diphosphate. It participates in porphyrin-containing compound metabolism; heme O biosynthesis; heme O from protoheme: step 1/1. Functionally, converts heme B (protoheme IX) to heme O by substitution of the vinyl group on carbon 2 of heme B porphyrin ring with a hydroxyethyl farnesyl side group. The chain is Protoheme IX farnesyltransferase from Verminephrobacter eiseniae (strain EF01-2).